The primary structure comprises 304 residues: Phosphoribosylaminoimidazole-succinocarboxamide synthase (304 aa).

The protein belongs to the SAICAR synthetase family.

It catalyses the reaction 5-amino-1-(5-phospho-D-ribosyl)imidazole-4-carboxylate + L-aspartate + ATP = (2S)-2-[5-amino-1-(5-phospho-beta-D-ribosyl)imidazole-4-carboxamido]succinate + ADP + phosphate + 2 H(+). Its pathway is purine metabolism; IMP biosynthesis via de novo pathway; 5-amino-1-(5-phospho-D-ribosyl)imidazole-4-carboxamide from 5-amino-1-(5-phospho-D-ribosyl)imidazole-4-carboxylate: step 1/2. This is Phosphoribosylaminoimidazole-succinocarboxamide synthase from Corynebacterium efficiens (strain DSM 44549 / YS-314 / AJ 12310 / JCM 11189 / NBRC 100395).